Reading from the N-terminus, the 221-residue chain is Ribosomal RNA large subunit methyltransferase E (221 aa).

5 residues coordinate S-adenosyl-L-methionine: Gly72, Trp74, Asp91, Asp107, and Asp131. Lys171 (proton acceptor) is an active-site residue.

This sequence belongs to the class I-like SAM-binding methyltransferase superfamily. RNA methyltransferase RlmE family.

The protein localises to the cytoplasm. The enzyme catalyses uridine(2552) in 23S rRNA + S-adenosyl-L-methionine = 2'-O-methyluridine(2552) in 23S rRNA + S-adenosyl-L-homocysteine + H(+). Its function is as follows. Specifically methylates the uridine in position 2552 of 23S rRNA at the 2'-O position of the ribose in the fully assembled 50S ribosomal subunit. In Zymomonas mobilis subsp. mobilis (strain ATCC 31821 / ZM4 / CP4), this protein is Ribosomal RNA large subunit methyltransferase E.